A 448-amino-acid chain; its full sequence is NADP-specific glutamate dehydrogenase (448 aa).

Substrate contacts are provided by Lys-88, Gln-109, and Lys-112. The Proton donor role is filled by Lys-124. A substrate-binding site is contributed by Gly-163. NADP(+) contacts are provided by Thr-207 and Asn-238. Substrate is bound at residue Ser-381.

Belongs to the Glu/Leu/Phe/Val dehydrogenases family. As to quaternary structure, homohexamer.

It carries out the reaction L-glutamate + NADP(+) + H2O = 2-oxoglutarate + NH4(+) + NADPH + H(+). In terms of biological role, catalyzes the reversible oxidative deamination of glutamate to alpha-ketoglutarate and ammonia. The protein is NADP-specific glutamate dehydrogenase (gdhA) of Helicobacter pylori (strain J99 / ATCC 700824) (Campylobacter pylori J99).